The sequence spans 323 residues: Di/tripeptide transport ATP-binding protein DppF (323 aa).

The ABC transporter domain maps to 5 to 254; it reads LTARDLTRHY…PLHPYTRALL (250 aa). Residue 47-54 coordinates ATP; it reads GESGCGKS.

Belongs to the ABC transporter superfamily. As to quaternary structure, the complex is composed of two ATP-binding proteins (DppD and DppF), two transmembrane proteins (DppB and DppC) and a solute-binding protein (DppA1-A5). Five orthologous SBPs (DppA1-A5) are present in P.aeruginosa, which increases the substrate specificity of the DppBCDF transporter.

The protein resides in the cell inner membrane. The catalysed reaction is a dipeptide(out) + ATP + H2O = a dipeptide(in) + ADP + phosphate + H(+). In terms of biological role, part of the ABC transporter DppABCDF involved in the uptake of various di/tripeptides. Is also involved in the uptake of phaseolotoxin, a toxic tripeptide inhibiting the enzyme ornithine carbamoyltransferase. Responsible for energy coupling to the transport system. This is Di/tripeptide transport ATP-binding protein DppF from Pseudomonas aeruginosa (strain UCBPP-PA14).